The following is a 238-amino-acid chain: Ribonuclease Rh (238 aa).

Positions 1–16 (MKAVLALATLIGSTLA) are cleaved as a signal peptide. 5 disulfide bridges follow: C19–C36, C26–C69, C35–C136, C79–C128, and C198–C229. Catalysis depends on residues H62, E121, and H125.

It belongs to the RNase T2 family.

The catalysed reaction is a ribonucleotidyl-ribonucleotide-RNA + H2O = a 3'-end 3'-phospho-ribonucleotide-RNA + a 5'-end dephospho-ribonucleoside-RNA + H(+). This is a base non-specific ribonuclease. This chain is Ribonuclease Rh, found in Rhizopus niveus.